Here is a 360-residue protein sequence, read N- to C-terminus: Phospho-N-acetylmuramoyl-pentapeptide-transferase (360 aa).

10 consecutive transmembrane segments (helical) span residues 25 to 45 (RGILGVLTALSLALWLGPWMI), 73 to 93 (TMGGALILSAIAVSTLLWADL), 97 to 117 (YVWVVLIVTLAFGAIGWVDDY), 134 to 154 (YFWQSVFGLAAAVFLYKTAPT), 168 to 188 (VTIPLGVGFVVLTYFVIVGSS), 199 to 219 (GLAIMPTVMVGGALGIFCYLS), 236 to 256 (SGELIVFCGALIGAGLGFLWF), 263 to 283 (VFMGDVGALALGAALGTIAVI), 288 to 308 (IVLFIMGGIFVVETLSVVIQV), and 338 to 358 (VIVRFWIITVILVLIGLATLK).

It belongs to the glycosyltransferase 4 family. MraY subfamily. It depends on Mg(2+) as a cofactor.

The protein resides in the cell inner membrane. The enzyme catalyses UDP-N-acetyl-alpha-D-muramoyl-L-alanyl-gamma-D-glutamyl-meso-2,6-diaminopimeloyl-D-alanyl-D-alanine + di-trans,octa-cis-undecaprenyl phosphate = di-trans,octa-cis-undecaprenyl diphospho-N-acetyl-alpha-D-muramoyl-L-alanyl-D-glutamyl-meso-2,6-diaminopimeloyl-D-alanyl-D-alanine + UMP. It participates in cell wall biogenesis; peptidoglycan biosynthesis. Functionally, catalyzes the initial step of the lipid cycle reactions in the biosynthesis of the cell wall peptidoglycan: transfers peptidoglycan precursor phospho-MurNAc-pentapeptide from UDP-MurNAc-pentapeptide onto the lipid carrier undecaprenyl phosphate, yielding undecaprenyl-pyrophosphoryl-MurNAc-pentapeptide, known as lipid I. The sequence is that of Phospho-N-acetylmuramoyl-pentapeptide-transferase from Pseudomonas putida (strain ATCC 700007 / DSM 6899 / JCM 31910 / BCRC 17059 / LMG 24140 / F1).